The chain runs to 658 residues: Probable methyl-accepting chemotaxis protein BT9727_0469 (658 aa).

The Cytoplasmic portion of the chain corresponds to 1 to 14 (MLQGKLRRSSLKAK). Residues 15–35 (LLVSFVIVLILPSIVIGWTSY) traverse the membrane as a helical segment. Residues 36–283 (QQAKTNFNET…ANPIFYKTLT (248 aa)) are Extracellular-facing. A coiled-coil region spans residues 44 to 109 (ETILQSAEDN…NKLHPEIEAI (66 aa)). Residues 150–221 (ITAPYKSSTT…AHPTMKPGDK (72 aa)) enclose the Cache domain. The chain crosses the membrane as a helical span at residues 284 to 304 (VIGISLIIGGVLIYFIIASII). Residues 301 to 353 (ASIISPLKQLVISSKKISEGDLTETITVHSKDEIGQLGESFNEMAASLHHVIS) enclose the HAMP domain. Topologically, residues 305 to 658 (SPLKQLVISS…LQEMIGKFKV (354 aa)) are cytoplasmic. Glutamate methyl ester (Glu) is present on Glu368. The Methyl-accepting transducer domain occupies 372 to 622 (SMKQTSEATE…ENAASVQNIA (251 aa)). At Gln592 the chain carries Deamidated glutamine. Glutamate methyl ester (Gln) is present on Gln592. 2 positions are modified to glutamate methyl ester (Glu): Glu627 and Glu634.

It belongs to the methyl-accepting chemotaxis (MCP) protein family.

The protein localises to the cell membrane. In terms of biological role, chemotactic-signal transducers respond to changes in the concentration of attractants and repellents in the environment, transduce a signal from the outside to the inside of the cell, and facilitate sensory adaptation through the variation of the level of methylation. In Bacillus thuringiensis subsp. konkukian (strain 97-27), this protein is Probable methyl-accepting chemotaxis protein BT9727_0469.